A 273-amino-acid polypeptide reads, in one-letter code: Phycocyanobilin lyase subunit alpha (273 aa).

The protein belongs to the CpcE/RpcE/PecE family. CpcE and CpcF associate to form a lyase.

Functionally, required for the chromophorylation of the cpcA gene product. The chain is Phycocyanobilin lyase subunit alpha (cpcE) from Synechococcus elongatus (strain ATCC 33912 / PCC 7942 / FACHB-805) (Anacystis nidulans R2).